We begin with the raw amino-acid sequence, 447 residues long: Tubulin beta chain (447 aa).

Residues Gln11, Glu69, Ser138, Gly142, Thr143, Gly144, Asn204, and Asn226 each contribute to the GTP site. Glu69 is a Mg(2+) binding site. The segment at 427–447 is disordered; the sequence is DAGIDEEEEEYEEELPLEGEE. Residues 429–447 are compositionally biased toward acidic residues; it reads GIDEEEEEYEEELPLEGEE.

Belongs to the tubulin family. In terms of assembly, dimer of alpha and beta chains. A typical microtubule is a hollow water-filled tube with an outer diameter of 25 nm and an inner diameter of 15 nM. Alpha-beta heterodimers associate head-to-tail to form protofilaments running lengthwise along the microtubule wall with the beta-tubulin subunit facing the microtubule plus end conferring a structural polarity. Microtubules usually have 13 protofilaments but different protofilament numbers can be found in some organisms and specialized cells. It depends on Mg(2+) as a cofactor.

It localises to the cytoplasm. It is found in the cytoskeleton. Functionally, tubulin is the major constituent of microtubules, a cylinder consisting of laterally associated linear protofilaments composed of alpha- and beta-tubulin heterodimers. Microtubules grow by the addition of GTP-tubulin dimers to the microtubule end, where a stabilizing cap forms. Below the cap, tubulin dimers are in GDP-bound state, owing to GTPase activity of alpha-tubulin. This chain is Tubulin beta chain (TUB2), found in Hapsidospora chrysogena (Acremonium chrysogenum).